The sequence spans 254 residues: 4-hydroxy-tetrahydrodipicolinate reductase (254 aa).

NAD(+) contacts are provided by residues 8-13, 87-89, and 111-114; these read GASGKM, GTT, and ATNM. Residue H143 is the Proton donor/acceptor of the active site. (S)-2,3,4,5-tetrahydrodipicolinate is bound at residue H144. K147 serves as the catalytic Proton donor. 153-154 provides a ligand contact to (S)-2,3,4,5-tetrahydrodipicolinate; sequence GT.

Belongs to the DapB family.

The protein localises to the cytoplasm. It carries out the reaction (S)-2,3,4,5-tetrahydrodipicolinate + NAD(+) + H2O = (2S,4S)-4-hydroxy-2,3,4,5-tetrahydrodipicolinate + NADH + H(+). It catalyses the reaction (S)-2,3,4,5-tetrahydrodipicolinate + NADP(+) + H2O = (2S,4S)-4-hydroxy-2,3,4,5-tetrahydrodipicolinate + NADPH + H(+). Its pathway is amino-acid biosynthesis; L-lysine biosynthesis via DAP pathway; (S)-tetrahydrodipicolinate from L-aspartate: step 4/4. Functionally, catalyzes the conversion of 4-hydroxy-tetrahydrodipicolinate (HTPA) to tetrahydrodipicolinate. The sequence is that of 4-hydroxy-tetrahydrodipicolinate reductase from Campylobacter fetus subsp. fetus (strain 82-40).